Consider the following 332-residue polypeptide: Ornithine carbamoyltransferase, catabolic (332 aa).

Carbamoyl phosphate-binding positions include 60–63 (STRT), glutamine 87, arginine 111, and 138–141 (HPTQ). L-ornithine is bound by residues asparagine 170, aspartate 230, and 234 to 235 (SM). Carbamoyl phosphate contacts are provided by residues 271 to 272 (CL) and arginine 316.

Belongs to the aspartate/ornithine carbamoyltransferase superfamily. OTCase family.

It localises to the cytoplasm. It catalyses the reaction carbamoyl phosphate + L-ornithine = L-citrulline + phosphate + H(+). Its pathway is amino-acid degradation; L-arginine degradation via ADI pathway; carbamoyl phosphate from L-arginine: step 2/2. In terms of biological role, reversibly catalyzes the transfer of the carbamoyl group from carbamoyl phosphate (CP) to the N(epsilon) atom of ornithine (ORN) to produce L-citrulline. This Bacillus cereus (strain ATCC 14579 / DSM 31 / CCUG 7414 / JCM 2152 / NBRC 15305 / NCIMB 9373 / NCTC 2599 / NRRL B-3711) protein is Ornithine carbamoyltransferase, catabolic (arcB).